The following is a 581-amino-acid chain: Jasmonoyl--L-amino acid synthetase GH3.5 (581 aa).

Residue Ser-92 coordinates ATP. A jasmonate-binding site is contributed by Ser-95. Residues Thr-115, Asn-161, and Gly-324–Trp-329 contribute to the ATP site. An an L-alpha-amino acid-binding site is contributed by Thr-159–Tyr-163. Jasmonate is bound by residues Ala-321–Gly-324 and Ser-326. Residue Glu-534–His-538 coordinates an L-alpha-amino acid. Lys-561 is an ATP binding site.

This sequence belongs to the IAA-amido conjugating enzyme family. As to expression, expressed in green shoots, roots and flowers.

The enzyme catalyses a jasmonate + an L-alpha-amino acid + ATP = a jasmonyl-L-amino acid + AMP + diphosphate + H(+). Catalyzes the synthesis of jasmonate-amino acid conjugates by adenylation. Catalyzes the conjugation of jasmonate (JA) to Ile when expressed in a heterologous system (E.coli). Catalyzes in vitro the conjugation of jasmonate (JA) to Ile, Phe, Cys, Leu, Met, Ala, Val and Trp. Involved in the production of JA-Ile in response to infection by the rice blast fungus Magnaporthe oryzae. Required for the accumulation of the flavonoid phytoalexin sakuranetin in response to infection by the rice blast fungus. Involved in herbivory-induced JA-Ile accumulation. Involved in the production of JA-Ile in response to wounding. Required for modulation of light and JA signaling in photomorphogenesis. Required for normal seed development. Required for optimal flower opening and closing and anther dehiscence. May catalyze the synthesis of indole-3-acetic acid (IAA)-amino acid conjugates, providing a mechanism for the plant to cope with the presence of excess auxin. This is Jasmonoyl--L-amino acid synthetase GH3.5 from Oryza sativa subsp. japonica (Rice).